A 309-amino-acid polypeptide reads, in one-letter code: Protoheme IX farnesyltransferase (309 aa).

A run of 9 helical transmembrane segments spans residues 35-55 (IGIV…ALYF), 64-84 (LHIV…SCSI), 114-134 (VLWL…MTTV), 135-155 (TAAI…TMWS), 161-181 (LNTV…WTAV), 187-207 (VVPL…FLAL), 236-256 (IVVW…LGVP), 257-277 (FLTV…YGFK), and 289-309 (FIYS…ATLW).

It belongs to the UbiA prenyltransferase family. Protoheme IX farnesyltransferase subfamily. As to quaternary structure, interacts with CtaA.

The protein resides in the cell membrane. The catalysed reaction is heme b + (2E,6E)-farnesyl diphosphate + H2O = Fe(II)-heme o + diphosphate. The protein operates within porphyrin-containing compound metabolism; heme O biosynthesis; heme O from protoheme: step 1/1. In terms of biological role, converts heme B (protoheme IX) to heme O by substitution of the vinyl group on carbon 2 of heme B porphyrin ring with a hydroxyethyl farnesyl side group. The polypeptide is Protoheme IX farnesyltransferase (Geobacillus sp. (strain WCH70)).